An 840-amino-acid chain; its full sequence is Homeobox-leucine zipper protein HOX9 (840 aa).

2 disordered regions span residues 1–26 (MAAA…AGMD) and 135–160 (NPSL…DASN). A compositionally biased stretch (gly residues) spans 12–21 (GSDGGGGGYD). The homeobox DNA-binding region spans 26 to 89 (DSGKYVRYTP…NRRCRDKQRK (64 aa)). A coiled-coil region spans residues 86 to 135 (KQRKEASRLQAVNRKLTAMNKLLMEENERLQKQVSQLVHENAYMKQQLQN). One can recognise an START domain in the interval 157–385 (DASNPSGLLT…IAQETSGEVV (229 aa)).

Belongs to the HD-ZIP homeobox family. Class III subfamily. As to expression, expressed in seedlings, roots, stems, leaf sheaths and blades and panicles.

It is found in the nucleus. In terms of biological role, probable transcription factor. This is Homeobox-leucine zipper protein HOX9 (HOX9) from Oryza sativa subsp. indica (Rice).